Reading from the N-terminus, the 517-residue chain is C-22 sterol desaturase ERG5 (517 aa).

Residues 21–41 traverse the membrane as a helical segment; it reads LAVAKATGSPITTLFTIIFLI. Cysteine 458 contacts heme.

This sequence belongs to the cytochrome P450 family. It depends on heme as a cofactor.

It is found in the endoplasmic reticulum membrane. The enzyme catalyses 5-dehydroepisterol + NADPH + O2 + H(+) = ergosta-5,7,22,24(28)-tetraen-3beta-ol + NADP(+) + 2 H2O. Its pathway is steroid metabolism; ergosterol biosynthesis; ergosterol from zymosterol: step 4/5. Its function is as follows. C-22 sterol desaturase; part of the third module of ergosterol biosynthesis pathway that includes the late steps of the pathway. ERG5 converts 5-dehydroepisterol into ergosta-5,7,22,24(28)-tetraen-3beta-ol by forming the C-22(23) double bond in the sterol side chain. The third module or late pathway involves the ergosterol synthesis itself through consecutive reactions that mainly occur in the endoplasmic reticulum (ER) membrane. Firstly, the squalene synthase ERG9 catalyzes the condensation of 2 farnesyl pyrophosphate moieties to form squalene, which is the precursor of all steroids. Squalene synthase is crucial for balancing the incorporation of farnesyl diphosphate (FPP) into sterol and nonsterol isoprene synthesis. Secondly, the squalene epoxidase ERG1 catalyzes the stereospecific oxidation of squalene to (S)-2,3-epoxysqualene, which is considered to be a rate-limiting enzyme in steroid biosynthesis. Then, the lanosterol synthase ERG7 catalyzes the cyclization of (S)-2,3 oxidosqualene to lanosterol, a reaction that forms the sterol core. In the next steps, lanosterol is transformed to zymosterol through a complex process involving various demethylation, reduction and desaturation reactions. The lanosterol 14-alpha-demethylase ERG11 (also known as CYP51) catalyzes C14-demethylation of lanosterol to produce 4,4'-dimethyl cholesta-8,14,24-triene-3-beta-ol, which is critical for ergosterol biosynthesis. The C-14 reductase ERG24 reduces the C14=C15 double bond of 4,4-dimethyl-cholesta-8,14,24-trienol to produce 4,4-dimethyl-cholesta-8,24-dienol. 4,4-dimethyl-cholesta-8,24-dienol is substrate of the C-4 demethylation complex ERG25-ERG26-ERG27 in which ERG25 catalyzes the three-step monooxygenation required for the demethylation of 4,4-dimethyl and 4alpha-methylsterols, ERG26 catalyzes the oxidative decarboxylation that results in a reduction of the 3-beta-hydroxy group at the C-3 carbon to an oxo group, and ERG27 is responsible for the reduction of the keto group on the C-3. ERG28 has a role as a scaffold to help anchor ERG25, ERG26 and ERG27 to the endoplasmic reticulum and ERG29 regulates the activity of the iron-containing C4-methylsterol oxidase ERG25. Then, the sterol 24-C-methyltransferase ERG6 catalyzes the methyl transfer from S-adenosyl-methionine to the C-24 of zymosterol to form fecosterol. The C-8 sterol isomerase ERG2 catalyzes the reaction which results in unsaturation at C-7 in the B ring of sterols and thus converts fecosterol to episterol. The sterol-C5-desaturase ERG3 then catalyzes the introduction of a C-5 double bond in the B ring to produce 5-dehydroepisterol. The C-22 sterol desaturase ERG5 further converts 5-dehydroepisterol into ergosta-5,7,22,24(28)-tetraen-3beta-ol by forming the C-22(23) double bond in the sterol side chain. Finally, ergosta-5,7,22,24(28)-tetraen-3beta-ol is substrate of the C-24(28) sterol reductase ERG4 to produce ergosterol. The sequence is that of C-22 sterol desaturase ERG5 from Candida albicans (strain SC5314 / ATCC MYA-2876) (Yeast).